Consider the following 256-residue polypeptide: MRTIDLNCDFGESFGVYRLGQEEILSYVTSVNIACGFHAGDPLVMRRTVQLAIQHGVAIGAHPGFPDLFGFGRRAMAVSPEEVYAYVVYQIGALAAFVKAEGGVMTHVKPHGALYNMAAKDAALAEAIAKAVHDVDPMLVLYGLSGSELIRAGRACGLRTASEVFADRTYQADGSLTPRSDPRAIIADEDEAVTQVLMMIRDRRVRSVQGTDVAIEADTVCLHGDNEQAVRFAKRLYQALQNEGIAIQAPRREERR.

Belongs to the LamB/PxpA family. As to quaternary structure, forms a complex composed of PxpA, PxpB and PxpC.

The enzyme catalyses 5-oxo-L-proline + ATP + 2 H2O = L-glutamate + ADP + phosphate + H(+). In terms of biological role, catalyzes the cleavage of 5-oxoproline to form L-glutamate coupled to the hydrolysis of ATP to ADP and inorganic phosphate. The sequence is that of 5-oxoprolinase subunit A from Geobacillus kaustophilus (strain HTA426).